Consider the following 356-residue polypeptide: Histidinol-phosphate aminotransferase (356 aa).

Lys-210 is subject to N6-(pyridoxal phosphate)lysine.

The protein belongs to the class-II pyridoxal-phosphate-dependent aminotransferase family. Histidinol-phosphate aminotransferase subfamily. As to quaternary structure, homodimer. Pyridoxal 5'-phosphate serves as cofactor.

The catalysed reaction is L-histidinol phosphate + 2-oxoglutarate = 3-(imidazol-4-yl)-2-oxopropyl phosphate + L-glutamate. The protein operates within amino-acid biosynthesis; L-histidine biosynthesis; L-histidine from 5-phospho-alpha-D-ribose 1-diphosphate: step 7/9. In Gluconacetobacter diazotrophicus (strain ATCC 49037 / DSM 5601 / CCUG 37298 / CIP 103539 / LMG 7603 / PAl5), this protein is Histidinol-phosphate aminotransferase.